We begin with the raw amino-acid sequence, 299 residues long: Transcription elongation factor A protein 2 (299 aa).

The TFIIS N-terminal domain occupies 6–83; the sequence is EEIARIARRL…KSWKKLLDAS (78 aa). K58 participates in a covalent cross-link: Glycyl lysine isopeptide (Lys-Gly) (interchain with G-Cter in ubiquitin). S60 and S100 each carry phosphoserine. The segment at 86-128 is disordered; sequence KARERGRGMPLPTSSRDASEAPDPSRKRPELPRAPSTPRITTF. Positions 102-116 are enriched in basic and acidic residues; that stretch reads DASEAPDPSRKRPEL. The TFIIS central domain occupies 138–254; that stretch reads VRNKCREMLT…EHQMARTGGT (117 aa). The TFIIS-type zinc finger occupies 257 to 297; it reads DLFTCGKCRKKNCTYTQVQTRSSDEPMTTFVVCNECGNRWK. Residues C261, C264, C289, and C292 each contribute to the Zn(2+) site.

Belongs to the TFS-II family. In terms of assembly, interacts with the basal transcription factor GTF2B. Interacts with REXO1. As to expression, testis and ovary specific.

It is found in the nucleus. In terms of biological role, necessary for efficient RNA polymerase II transcription elongation past template-encoded arresting sites. The arresting sites in DNA have the property of trapping a certain fraction of elongating RNA polymerases that pass through, resulting in locked ternary complexes. Cleavage of the nascent transcript by S-II allows the resumption of elongation from the new 3'-terminus. The polypeptide is Transcription elongation factor A protein 2 (TCEA2) (Homo sapiens (Human)).